Reading from the N-terminus, the 430-residue chain is GTPase Obg (430 aa).

In terms of domain architecture, Obg spans 1-158; it reads MFVDQVKISL…LEVTLELKLL (158 aa). The disordered stretch occupies residues 118-145; sequence RGGRGGRGNSRFATPRNPAPDFSENGEP. The 171-residue stretch at 159-329 folds into the OBG-type G domain; it reads ADVGLVGFPS…LLYQIADKLE (171 aa). Residues 165 to 172, 190 to 194, 212 to 215, 282 to 285, and 310 to 312 each bind GTP; these read GFPSVGKS, FTTIK, DLPG, NKMD, and STI. 2 residues coordinate Mg(2+): S172 and T192. Residues 352-430 form the OCT domain; sequence KHTPSADKFT…ILGGEFEFVE (79 aa).

This sequence belongs to the TRAFAC class OBG-HflX-like GTPase superfamily. OBG GTPase family. As to quaternary structure, monomer. The cofactor is Mg(2+).

Its subcellular location is the cytoplasm. Functionally, an essential GTPase which binds GTP, GDP and possibly (p)ppGpp with moderate affinity, with high nucleotide exchange rates and a fairly low GTP hydrolysis rate. Plays a role in control of the cell cycle, stress response, ribosome biogenesis and in those bacteria that undergo differentiation, in morphogenesis control. This Staphylococcus epidermidis (strain ATCC 35984 / DSM 28319 / BCRC 17069 / CCUG 31568 / BM 3577 / RP62A) protein is GTPase Obg.